The following is a 361-amino-acid chain: 3-dehydroquinate synthase (361 aa).

NAD(+) is bound by residues 71 to 76 (DGEQYK), 105 to 109 (GVIGD), 129 to 130 (TT), K142, and K151. Residues E184, H247, and H264 each contribute to the Zn(2+) site.

This sequence belongs to the sugar phosphate cyclases superfamily. Dehydroquinate synthase family. Requires Co(2+) as cofactor. Zn(2+) serves as cofactor. NAD(+) is required as a cofactor.

The protein resides in the cytoplasm. It catalyses the reaction 7-phospho-2-dehydro-3-deoxy-D-arabino-heptonate = 3-dehydroquinate + phosphate. It participates in metabolic intermediate biosynthesis; chorismate biosynthesis; chorismate from D-erythrose 4-phosphate and phosphoenolpyruvate: step 2/7. In terms of biological role, catalyzes the conversion of 3-deoxy-D-arabino-heptulosonate 7-phosphate (DAHP) to dehydroquinate (DHQ). In Pectobacterium atrosepticum (strain SCRI 1043 / ATCC BAA-672) (Erwinia carotovora subsp. atroseptica), this protein is 3-dehydroquinate synthase.